Consider the following 87-residue polypeptide: Small ribosomal subunit protein bS20 (87 aa).

Residues 1–22 (MANTSQARKRARQAGVRRVRNA) are disordered. Positions 7–20 (ARKRARQAGVRRVR) are enriched in basic residues.

It belongs to the bacterial ribosomal protein bS20 family.

Binds directly to 16S ribosomal RNA. In Nitrosococcus oceani (strain ATCC 19707 / BCRC 17464 / JCM 30415 / NCIMB 11848 / C-107), this protein is Small ribosomal subunit protein bS20.